Reading from the N-terminus, the 924-residue chain is DNA repair and recombination protein RDH54 (924 aa).

Over residues 1–10 (MQIPKYENKP) the composition is skewed to basic and acidic residues. 2 disordered regions span residues 1–21 (MQIPKYENKPFKPPRRVGSNK) and 155–183 (EALSQNMGNPNPPTTSTTETVPSTKNDGG). A compositionally biased stretch (low complexity) spans 168–178 (TTSTTETVPST). Residues 299–487 (LENDSDISGC…FTIIDFINPG (189 aa)) enclose the Helicase ATP-binding domain. Residue 346-353 (IPLTGLCK) participates in ATP binding. A DEGH box motif is present at residues 472–475 (NDLN). Residue Lys615 forms a Glycyl lysine isopeptide (Lys-Gly) (interchain with G-Cter in ubiquitin) linkage. The region spanning 631–790 (KLRVLMTLLE…DSEMRNKESS (160 aa)) is the Helicase C-terminal domain.

Belongs to the SNF2/RAD54 helicase family. In terms of assembly, interacts with RAD51 and DMC1.

The protein resides in the nucleus. It carries out the reaction ATP + H2O = ADP + phosphate + H(+). Functionally, involved in the recombinational repair of double-strand breaks (DSB) in DNA during mitosis and meiosis. Has DNA dependent ATPase activity. Promotes D-loop (displacement loop) formation with RAD51 recombinase. Modifies the topology of double-stranded DNA during the D-loop reaction to facilitate the invasion of the homologous duplex molecule by the initiating single-stranded DNA substrate. Required for adaptation from G2/M checkpoint arrest induced by a double strand break, by participating in monitoring the extent of single-stranded DNA produced by resection of DNA ends. This role is distinct from its roles in recombination. Promotes colocalization of RAD51 and DMC1 during meiotic recombination. Involved in crossover interference. The polypeptide is DNA repair and recombination protein RDH54 (RDH54) (Saccharomyces cerevisiae (strain RM11-1a) (Baker's yeast)).